Consider the following 418-residue polypeptide: Tyrosine--tRNA ligase (418 aa).

Y34 serves as a coordination point for L-tyrosine. Positions 39–48 match the 'HIGH' region motif; sequence PTADSLHLGH. Residues Y169 and Q173 each coordinate L-tyrosine. The short motif at 229-233 is the 'KMSKS' region element; that stretch reads KFGKS. K232 is a binding site for ATP. An S4 RNA-binding domain is found at 352-418; it reads LNIVDMLVTA…GKKKYAVLTY (67 aa).

Belongs to the class-I aminoacyl-tRNA synthetase family. TyrS type 1 subfamily. In terms of assembly, homodimer.

It is found in the cytoplasm. The catalysed reaction is tRNA(Tyr) + L-tyrosine + ATP = L-tyrosyl-tRNA(Tyr) + AMP + diphosphate + H(+). Catalyzes the attachment of tyrosine to tRNA(Tyr) in a two-step reaction: tyrosine is first activated by ATP to form Tyr-AMP and then transferred to the acceptor end of tRNA(Tyr). This Streptococcus equi subsp. zooepidemicus (strain H70) protein is Tyrosine--tRNA ligase.